Here is a 238-residue protein sequence, read N- to C-terminus: NAD-dependent protein deacylase (238 aa).

Residues 1 to 237 form the Deacetylase sirtuin-type domain; the sequence is MRGIMKVFVL…PAWVERLLAR (237 aa). 12–31 serves as a coordination point for NAD(+); sequence GAGVSAESGLGTFRDKDGVW. Substrate-binding residues include Tyr56 and Arg59. NAD(+) is bound at residue 94–97; sequence QNVD. His112 (proton acceptor) is an active-site residue. 4 residues coordinate Zn(2+): Cys120, Cys123, Cys139, and Cys142. Residues 179 to 181, 205 to 207, and Ala223 each bind NAD(+); these read GTS and NLE.

This sequence belongs to the sirtuin family. Class III subfamily. The cofactor is Zn(2+).

The protein resides in the cytoplasm. The enzyme catalyses N(6)-acetyl-L-lysyl-[protein] + NAD(+) + H2O = 2''-O-acetyl-ADP-D-ribose + nicotinamide + L-lysyl-[protein]. The catalysed reaction is N(6)-succinyl-L-lysyl-[protein] + NAD(+) + H2O = 2''-O-succinyl-ADP-D-ribose + nicotinamide + L-lysyl-[protein]. NAD-dependent lysine deacetylase and desuccinylase that specifically removes acetyl and succinyl groups on target proteins. Modulates the activities of several proteins which are inactive in their acylated form. The sequence is that of NAD-dependent protein deacylase from Caulobacter vibrioides (strain ATCC 19089 / CIP 103742 / CB 15) (Caulobacter crescentus).